Here is a 96-residue protein sequence, read N- to C-terminus: Large ribosomal subunit protein bL28 (96 aa).

Residues 1–21 (MSRVCELTGKGPMTGNNVSHA) are disordered.

The protein belongs to the bacterial ribosomal protein bL28 family.

This chain is Large ribosomal subunit protein bL28, found in Jannaschia sp. (strain CCS1).